The following is a 244-amino-acid chain: tRNA (guanine-N(1)-)-methyltransferase (244 aa).

S-adenosyl-L-methionine contacts are provided by residues G111 and 130–135; that span reads IGDYVL.

The protein belongs to the RNA methyltransferase TrmD family. Homodimer.

It is found in the cytoplasm. The enzyme catalyses guanosine(37) in tRNA + S-adenosyl-L-methionine = N(1)-methylguanosine(37) in tRNA + S-adenosyl-L-homocysteine + H(+). Specifically methylates guanosine-37 in various tRNAs. The polypeptide is tRNA (guanine-N(1)-)-methyltransferase (Phytoplasma australiense).